The chain runs to 328 residues: Delta-aminolevulinic acid dehydratase (328 aa).

The active-site Schiff-base intermediate with substrate is Lys200. 2 residues coordinate 5-aminolevulinate: Arg210 and Lys222. Residue Glu238 coordinates Mg(2+). Catalysis depends on Lys253, which acts as the Schiff-base intermediate with substrate. 2 residues coordinate 5-aminolevulinate: Ser279 and Tyr318.

The protein belongs to the ALAD family. In terms of assembly, homooctamer.

It carries out the reaction 2 5-aminolevulinate = porphobilinogen + 2 H2O + H(+). The protein operates within porphyrin-containing compound metabolism; protoporphyrin-IX biosynthesis; coproporphyrinogen-III from 5-aminolevulinate: step 1/4. With respect to regulation, stimulated by magnesium, inhibited by zinc. In terms of biological role, catalyzes an early step in the biosynthesis of tetrapyrroles. Binds two molecules of 5-aminolevulinate per subunit, each at a distinct site, and catalyzes their condensation to form porphobilinogen. This Chlorobaculum tepidum (strain ATCC 49652 / DSM 12025 / NBRC 103806 / TLS) (Chlorobium tepidum) protein is Delta-aminolevulinic acid dehydratase (hemB).